A 368-amino-acid polypeptide reads, in one-letter code: 4-hydroxy-3-methylbut-2-en-1-yl diphosphate synthase (flavodoxin) (368 aa).

Residues Cys-268, Cys-271, Cys-303, and Glu-310 each contribute to the [4Fe-4S] cluster site.

Belongs to the IspG family. Requires [4Fe-4S] cluster as cofactor.

It carries out the reaction (2E)-4-hydroxy-3-methylbut-2-enyl diphosphate + oxidized [flavodoxin] + H2O + 2 H(+) = 2-C-methyl-D-erythritol 2,4-cyclic diphosphate + reduced [flavodoxin]. The protein operates within isoprenoid biosynthesis; isopentenyl diphosphate biosynthesis via DXP pathway; isopentenyl diphosphate from 1-deoxy-D-xylulose 5-phosphate: step 5/6. In terms of biological role, converts 2C-methyl-D-erythritol 2,4-cyclodiphosphate (ME-2,4cPP) into 1-hydroxy-2-methyl-2-(E)-butenyl 4-diphosphate. The chain is 4-hydroxy-3-methylbut-2-en-1-yl diphosphate synthase (flavodoxin) from Listeria monocytogenes serotype 4b (strain CLIP80459).